Here is a 198-residue protein sequence, read N- to C-terminus: FMN-dependent NADH:quinone oxidoreductase (198 aa).

FMN is bound by residues Ser9 and Met95 to Phe98.

It belongs to the azoreductase type 1 family. As to quaternary structure, homodimer. It depends on FMN as a cofactor.

The enzyme catalyses 2 a quinone + NADH + H(+) = 2 a 1,4-benzosemiquinone + NAD(+). The catalysed reaction is N,N-dimethyl-1,4-phenylenediamine + anthranilate + 2 NAD(+) = 2-(4-dimethylaminophenyl)diazenylbenzoate + 2 NADH + 2 H(+). In terms of biological role, quinone reductase that provides resistance to thiol-specific stress caused by electrophilic quinones. Functionally, also exhibits azoreductase activity. Catalyzes the reductive cleavage of the azo bond in aromatic azo compounds to the corresponding amines. In Alcanivorax borkumensis (strain ATCC 700651 / DSM 11573 / NCIMB 13689 / SK2), this protein is FMN-dependent NADH:quinone oxidoreductase.